Reading from the N-terminus, the 583-residue chain is Aspartate--tRNA ligase (583 aa).

E174 contributes to the L-aspartate binding site. The segment at Q198–K201 is aspartate. R220 contacts L-aspartate. Residues R220–E222 and Q229 contribute to the ATP site. Residue H443 coordinates L-aspartate. An ATP-binding site is contributed by E477. Position 484 (R484) interacts with L-aspartate. An ATP-binding site is contributed by G529–R532.

Belongs to the class-II aminoacyl-tRNA synthetase family. Type 1 subfamily. In terms of assembly, homodimer.

The protein localises to the cytoplasm. The enzyme catalyses tRNA(Asp) + L-aspartate + ATP = L-aspartyl-tRNA(Asp) + AMP + diphosphate. Catalyzes the attachment of L-aspartate to tRNA(Asp) in a two-step reaction: L-aspartate is first activated by ATP to form Asp-AMP and then transferred to the acceptor end of tRNA(Asp). The sequence is that of Aspartate--tRNA ligase from Streptococcus agalactiae serotype III (strain NEM316).